A 690-amino-acid chain; its full sequence is Glycine--tRNA ligase beta subunit (690 aa).

The protein belongs to the class-II aminoacyl-tRNA synthetase family. As to quaternary structure, tetramer of two alpha and two beta subunits.

Its subcellular location is the cytoplasm. The catalysed reaction is tRNA(Gly) + glycine + ATP = glycyl-tRNA(Gly) + AMP + diphosphate. The polypeptide is Glycine--tRNA ligase beta subunit (Desulfitobacterium hafniense (strain DSM 10664 / DCB-2)).